The sequence spans 223 residues: Phosphoribosylformylglycinamidine synthase subunit PurQ (223 aa).

Positions 2 to 223 (KTAIIQLPGL…FQSALELAKG (222 aa)) constitute a Glutamine amidotransferase type-1 domain. The Nucleophile role is filled by cysteine 86. Catalysis depends on residues histidine 196 and glutamate 198.

In terms of assembly, part of the FGAM synthase complex composed of 1 PurL, 1 PurQ and 2 PurS subunits.

It localises to the cytoplasm. The enzyme catalyses N(2)-formyl-N(1)-(5-phospho-beta-D-ribosyl)glycinamide + L-glutamine + ATP + H2O = 2-formamido-N(1)-(5-O-phospho-beta-D-ribosyl)acetamidine + L-glutamate + ADP + phosphate + H(+). The catalysed reaction is L-glutamine + H2O = L-glutamate + NH4(+). It participates in purine metabolism; IMP biosynthesis via de novo pathway; 5-amino-1-(5-phospho-D-ribosyl)imidazole from N(2)-formyl-N(1)-(5-phospho-D-ribosyl)glycinamide: step 1/2. In terms of biological role, part of the phosphoribosylformylglycinamidine synthase complex involved in the purines biosynthetic pathway. Catalyzes the ATP-dependent conversion of formylglycinamide ribonucleotide (FGAR) and glutamine to yield formylglycinamidine ribonucleotide (FGAM) and glutamate. The FGAM synthase complex is composed of three subunits. PurQ produces an ammonia molecule by converting glutamine to glutamate. PurL transfers the ammonia molecule to FGAR to form FGAM in an ATP-dependent manner. PurS interacts with PurQ and PurL and is thought to assist in the transfer of the ammonia molecule from PurQ to PurL. The protein is Phosphoribosylformylglycinamidine synthase subunit PurQ of Bartonella henselae (strain ATCC 49882 / DSM 28221 / CCUG 30454 / Houston 1) (Rochalimaea henselae).